We begin with the raw amino-acid sequence, 378 residues long: Protein SLG1 (378 aa).

The signal sequence occupies residues 1–21 (MRPNKTSLLLALLSILSQANA). A WSC domain is found at 22–110 (YEYVNCFSSL…EDAYSVYQLD (89 aa)). Over 22–264 (YEYVNCFSSL…THKKKANVGA (243 aa)) the chain is Extracellular. N-linked (GlcNAc...) asparagine glycosylation is present at Asn65. Disordered stretches follow at residues 115-201 (SNSI…TSST) and 236-256 (QNSG…SKTH). The segment covering 236–253 (QNSGSATGTAGSDSTSGS) has biased composition (low complexity). A helical membrane pass occupies residues 265 to 285 (IVGGVVGGVVGAVAIALCILL). Topologically, residues 286-378 (IVRHINMKRE…LTVVNPDEAD (93 aa)) are cytoplasmic. A disordered region spans residues 318–378 (ASSFSSNHGP…LTVVNPDEAD (61 aa)). Low complexity predominate over residues 319–331 (SSFSSNHGPSSGS). Phosphoserine is present on residues Ser331 and Ser353.

Glycosylated. Phosphorylated. Phosphorylation serves a negative regulatory role.

It is found in the cell membrane. In terms of biological role, plays a role during G1 to regulate entering or exiting the cell cycle. Involved in stress responses. Has a role in cell wall integrity signaling. Activates ROM1 or ROM2 catalyzed guanine nucleotide exchange toward RHO1. Important regulator of the actin cytoskeleton rearrangements in conditions of cell wall expansion and membrane stretching. Specifically required for the actin reorganization induced by hypo-osmotic shock. Multicopy suppressor of 1,3-beta-glucan synthase (GS). Activates GS upstream of RHO1. Acts positively on the PKC1-MAPK pathway. Activates transiently SLT2 during alkaline stress, which leads to an increase in the expression of several specific genes. The polypeptide is Protein SLG1 (SLG1) (Saccharomyces cerevisiae (strain ATCC 204508 / S288c) (Baker's yeast)).